A 501-amino-acid chain; its full sequence is MSSPAQPAVPAPLANLKIQHTKIFINNEWHNSLNGKKFPVINPATEEVICHVEEGDKADVDKAVKAARQAFQIGSPWRTMDASERGCLLNKLADLMERDRVLLATMESMNAGKIFTHAYLLDTEVSIKALKYFAGWADKIHGQTIPSDGDVFTYTRREPIGVCGQIIPWNGPLILFIWKIGAALSCGNTVIVKPAEQTPLTALYMASLIKEAGFPPGVVNVVPGYGSTAGAAISSHMDIDKVSFTGSTEVGKLIKEAAGKSNLKRVTLELGGKSPCIVFADADLDSAVEFAHQGVFFHQGQICVAASRLFVEESIYDEFVRRSVERAKKYVLGNPLDSGISQGPQIDKEQHAKILDLIESGKKEGAKLECGGGRWGNKGFFVQPTVFSNVTDEMRIAKEEIFGPVQQIMKFKSIDEVIKRANNTPYGLAAGVFTKDLDRAITVSSALQAGTVWVNCYLTLSVQCPFGGFKMSGNGREMGEQGVYEYTELKTVAMKISQKNS.

Ser-2 bears the N-acetylserine mark. Residues Lys-91 and Lys-128 each carry the N6-acetyllysine modification. 246 to 251 (GSTEVG) serves as a coordination point for NAD(+). Lys-252 carries the N6-acetyllysine modification. The active-site Proton acceptor is the Glu-269. The active-site Nucleophile is the Cys-303. N6-acetyllysine is present on residues Lys-353, Lys-367, and Lys-410. Ser-413 carries the post-translational modification Phosphoserine. Lys-419, Lys-435, and Lys-495 each carry N6-acetyllysine.

Belongs to the aldehyde dehydrogenase family. As to quaternary structure, homotetramer. As to expression, very low levels in lung and liver.

Its subcellular location is the cytoplasm. The enzyme catalyses an aldehyde + NAD(+) + H2O = a carboxylate + NADH + 2 H(+). The protein operates within alcohol metabolism; ethanol degradation; acetate from ethanol: step 2/2. Its function is as follows. Can oxidize benzaldehyde, propionaldehyde and acetaldehyde. No detectable activity with retinal. The chain is Aldehyde dehydrogenase, cytosolic 1 (Aldh1a7) from Rattus norvegicus (Rat).